We begin with the raw amino-acid sequence, 1368 residues long: DNA-directed RNA polymerase subunit beta' (1368 aa).

The segment at 1–38 (MTSSSKPARKTSKSKSKASKAAEAPAAPSNELSREAPT) is disordered. Positions 7-18 (PARKTSKSKSKA) are enriched in basic residues. Residues 19 to 29 (SKAAEAPAAPS) are compositionally biased toward low complexity. Zn(2+)-binding residues include Cys-250, Cys-318, Cys-325, and Cys-328. The disordered stretch occupies residues 1340–1368 (AGEELAEEHVPDPGALEGLQEEGLLSQDS). Positions 1353–1368 (GALEGLQEEGLLSQDS) are enriched in low complexity.

This sequence belongs to the RNA polymerase beta' chain family. RpoC2 subfamily. In cyanobacteria the RNAP catalytic core is composed of 2 alpha, 1 beta, 1 beta', 1 gamma and 1 omega subunit. When a sigma factor is associated with the core the holoenzyme is formed, which can initiate transcription. Zn(2+) is required as a cofactor.

The catalysed reaction is RNA(n) + a ribonucleoside 5'-triphosphate = RNA(n+1) + diphosphate. Its function is as follows. DNA-dependent RNA polymerase catalyzes the transcription of DNA into RNA using the four ribonucleoside triphosphates as substrates. This chain is DNA-directed RNA polymerase subunit beta', found in Synechococcus sp. (strain RCC307).